A 78-amino-acid polypeptide reads, in one-letter code: Short neurotoxin SNTX26 (78 aa).

The signal sequence occupies residues 1–21; it reads MKTLLLTFLVVTIVCLDLGYT. Intrachain disulfides connect Cys-24/Cys-40, Cys-33/Cys-58, Cys-62/Cys-70, and Cys-71/Cys-76.

This sequence belongs to the three-finger toxin family. Short-chain subfamily. In terms of tissue distribution, expressed by the venom gland.

It localises to the secreted. Functionally, this three-finger toxin binds and inhibits the nicotinic acetylcholine receptor (nAChR). In Ophiophagus hannah (King cobra), this protein is Short neurotoxin SNTX26.